We begin with the raw amino-acid sequence, 368 residues long: Large ribosomal subunit protein mL46 (368 aa).

The disordered stretch occupies residues 53–81 (TATATTTTTLPPPHPPVTTSTGTHAATST). A compositionally biased stretch (low complexity) spans 69 to 81 (VTTSTGTHAATST).

This sequence belongs to the mitochondrion-specific ribosomal protein mL46 family. Component of the mitochondrial large ribosomal subunit (mt-LSU). Mature N.crassa 74S mitochondrial ribosomes consist of a small (37S) and a large (54S) subunit. The 37S small subunit contains a 16S ribosomal RNA (16S mt-rRNA) and 32 different proteins. The 54S large subunit contains a 23S rRNA (23S mt-rRNA) and 42 different proteins.

The protein resides in the mitochondrion. In terms of biological role, component of the mitochondrial ribosome (mitoribosome), a dedicated translation machinery responsible for the synthesis of mitochondrial genome-encoded proteins, including at least some of the essential transmembrane subunits of the mitochondrial respiratory chain. The mitoribosomes are attached to the mitochondrial inner membrane and translation products are cotranslationally integrated into the membrane. The protein is Large ribosomal subunit protein mL46 (mrpl17) of Neurospora crassa (strain ATCC 24698 / 74-OR23-1A / CBS 708.71 / DSM 1257 / FGSC 987).